Here is a 415-residue protein sequence, read N- to C-terminus: ATP-dependent Clp protease ATP-binding subunit ClpX (415 aa).

The 52-residue stretch at 1 to 52 (MAESKNNKKRCSFCGRSENEVGFLITGMNGYICDSCATQAYEITQEAMGAGK) folds into the ClpX-type ZB domain. C11, C14, C33, and C36 together coordinate Zn(2+). 121–128 (STGTGKTL) serves as a coordination point for ATP.

Belongs to the ClpX chaperone family. In terms of assembly, component of the ClpX-ClpP complex. Forms a hexameric ring that, in the presence of ATP, binds to fourteen ClpP subunits assembled into a disk-like structure with a central cavity, resembling the structure of eukaryotic proteasomes.

In terms of biological role, ATP-dependent specificity component of the Clp protease. It directs the protease to specific substrates. Can perform chaperone functions in the absence of ClpP. The sequence is that of ATP-dependent Clp protease ATP-binding subunit ClpX from Bacteroides fragilis (strain ATCC 25285 / DSM 2151 / CCUG 4856 / JCM 11019 / LMG 10263 / NCTC 9343 / Onslow / VPI 2553 / EN-2).